A 561-amino-acid polypeptide reads, in one-letter code: DNA ligase B (561 aa).

The active-site N6-AMP-lysine intermediate is Lys-125.

The protein belongs to the NAD-dependent DNA ligase family. LigB subfamily.

The enzyme catalyses NAD(+) + (deoxyribonucleotide)n-3'-hydroxyl + 5'-phospho-(deoxyribonucleotide)m = (deoxyribonucleotide)n+m + AMP + beta-nicotinamide D-nucleotide.. Catalyzes the formation of phosphodiester linkages between 5'-phosphoryl and 3'-hydroxyl groups in double-stranded DNA using NAD as a coenzyme and as the energy source for the reaction. In Salmonella schwarzengrund (strain CVM19633), this protein is DNA ligase B.